Here is an 88-residue protein sequence, read N- to C-terminus: Elongation factor 1-beta (88 aa).

Belongs to the EF-1-beta/EF-1-delta family.

Functionally, promotes the exchange of GDP for GTP in EF-1-alpha/GDP, thus allowing the regeneration of EF-1-alpha/GTP that could then be used to form the ternary complex EF-1-alpha/GTP/AAtRNA. This Natronomonas pharaonis (strain ATCC 35678 / DSM 2160 / CIP 103997 / JCM 8858 / NBRC 14720 / NCIMB 2260 / Gabara) (Halobacterium pharaonis) protein is Elongation factor 1-beta.